We begin with the raw amino-acid sequence, 200 residues long: Pyridoxal 5'-phosphate synthase subunit PdxT (200 aa).

L-glutamine is bound at residue 52–54 (GES). The active-site Nucleophile is C84. L-glutamine contacts are provided by residues R116 and 145 to 146 (IR). Catalysis depends on charge relay system residues H181 and E183.

It belongs to the glutaminase PdxT/SNO family. In the presence of PdxS, forms a dodecamer of heterodimers. Only shows activity in the heterodimer.

The enzyme catalyses aldehydo-D-ribose 5-phosphate + D-glyceraldehyde 3-phosphate + L-glutamine = pyridoxal 5'-phosphate + L-glutamate + phosphate + 3 H2O + H(+). It catalyses the reaction L-glutamine + H2O = L-glutamate + NH4(+). It participates in cofactor biosynthesis; pyridoxal 5'-phosphate biosynthesis. Catalyzes the hydrolysis of glutamine to glutamate and ammonia as part of the biosynthesis of pyridoxal 5'-phosphate. The resulting ammonia molecule is channeled to the active site of PdxS. This chain is Pyridoxal 5'-phosphate synthase subunit PdxT, found in Saccharolobus islandicus (strain L.S.2.15 / Lassen #1) (Sulfolobus islandicus).